A 1492-amino-acid polypeptide reads, in one-letter code: Putative leucine-rich repeat-containing protein DDB_G0290503 (1492 aa).

One can recognise a PH domain in the interval 2–111 (SILLEGYLEK…WIEGIKDAIK (110 aa)). LRR repeat units follow at residues 123-144 (LDGL…IKHL), 180-204 (IKSL…VEKL), 258-284 (QESL…QFEK), 329-351 (KNQF…SIVD), 352-375 (DKLK…EIDN), 389-413 (ISKI…SIDK), 439-462 (LEKL…ILEI), 519-543 (INEL…NQSS), 551-575 (LNQL…IIER), 579-603 (IDQL…NESS), 632-656 (INEL…NQSS), 728-752 (LDEL…NQSS), 806-830 (LKSL…NQDS), 831-855 (LDEL…NQSS), 895-919 (INEL…NESS), 927-951 (LIQL…IIER), 955-979 (LNQL…NQSS), 1013-1036 (NEKL…NESL), 1044-1068 (FENL…IIDV), 1138-1164 (LQDL…ELKE), and 1210-1232 (NAHL…GFNE). Residues 1272–1292 (RSSSSSLHQQQQMISPDLSNS) form a disordered region. The segment covering 1274-1286 (SSSSLHQQQQMIS) has biased composition (low complexity). LRR repeat units lie at residues 1424–1444 (SSEK…KYFF) and 1445–1468 (AIAR…IFDM).

This is Putative leucine-rich repeat-containing protein DDB_G0290503 from Dictyostelium discoideum (Social amoeba).